The primary structure comprises 577 residues: Adenine deaminase (577 aa).

The protein belongs to the metallo-dependent hydrolases superfamily. Adenine deaminase family. Mn(2+) is required as a cofactor.

It catalyses the reaction adenine + H2O + H(+) = hypoxanthine + NH4(+). This Geobacillus kaustophilus (strain HTA426) protein is Adenine deaminase.